Consider the following 310-residue polypeptide: Phosphoribosylaminoimidazole-succinocarboxamide synthase (310 aa).

Belongs to the SAICAR synthetase family.

The enzyme catalyses 5-amino-1-(5-phospho-D-ribosyl)imidazole-4-carboxylate + L-aspartate + ATP = (2S)-2-[5-amino-1-(5-phospho-beta-D-ribosyl)imidazole-4-carboxamido]succinate + ADP + phosphate + 2 H(+). Its pathway is purine metabolism; IMP biosynthesis via de novo pathway; 5-amino-1-(5-phospho-D-ribosyl)imidazole-4-carboxamide from 5-amino-1-(5-phospho-D-ribosyl)imidazole-4-carboxylate: step 1/2. The chain is Phosphoribosylaminoimidazole-succinocarboxamide synthase from Xanthomonas axonopodis pv. citri (strain 306).